A 92-amino-acid polypeptide reads, in one-letter code: Cell division topological specificity factor (92 aa).

This sequence belongs to the MinE family.

Its function is as follows. Prevents the cell division inhibition by proteins MinC and MinD at internal division sites while permitting inhibition at polar sites. This ensures cell division at the proper site by restricting the formation of a division septum at the midpoint of the long axis of the cell. The protein is Cell division topological specificity factor of Gluconobacter oxydans (strain 621H) (Gluconobacter suboxydans).